The sequence spans 870 residues: MTGHVDPVHFERLKIQSVTFGSANDNASLQVHNVSKSPEYSKYSYSRKNNEPIEFIQLREEEGPIVKVEEEDGLTLRFQLEFHAQEGKRDVTNLTCVYGTSPQQLDRLITREFSSDANFQNNHQVFLIGNIEFHSNENSKKIEWTWSNQSLHTLYFRNGGSPIYLCFAEYDKRLNCLVPLKTFQFYVTESDQDSTPATPFPMPMHLAEETATSPEISDAPPLSGNVDPLPINSPPLTNPVARDIDQTEPEDGPLFRATILNYERTTHDMRMVLKKLIKRIEHVAHSHGLLYMSYKELMSAFERVATINPPAFKPFLDHYYAAAAQSFDSFNIDRARLLRNFLIEPLRKIYDTDIKNVSTKKKDFEETSRDYYTSLSRYLSKSEKETSSDKTKESKFAAKKRDFELSRFDYYSYMQDINGGRKGQEVLSVLTSFAANDYNLIHSSLTDIDALRPSIIQLQDIVTEANKEFQLLRAEREERRRYIETSSRELEDKDAEIAAQAYKAKVDQDTSAKQGLLLAFSKSTSDLQVVGKSGWHKYWVVLDHGKICEYANWKQSLELHTEPIDLLMATVRPAQSVSRKFCFEVITPQTKRTYQATSKAEMHSWIEAIQYSISESIVQKGKGTSMNSEETSVKHGPTSTIGKALQRVASVTSPSRHNSDSKEKKQTKSPSLVKTLKEMHSSDQSCADCNTTARVEWCAINFPVVLCIDCSGIHRSLGTHITKIRSLTLDKFNPETVDLLYATGNSFVNEIYEGGITDWKIKNFENQERRVQFVKDKYLYKRFIKSSFSHDPNTGLLESIEHSNLKEAVLCLALGADVNYQRAVVKALLKNNYLIAELLTLNGASLNVDEVTMETLSARAQAFVMNRATP.

Residues 212 to 251 (TSPEISDAPPLSGNVDPLPINSPPLTNPVARDIDQTEPED) form a disordered region. In terms of domain architecture, PH spans 510–614 (TSAKQGLLLA…WIEAIQYSIS (105 aa)). Residues serine 625, serine 653, and serine 655 each carry the phosphoserine modification. The tract at residues 647–672 (RVASVTSPSRHNSDSKEKKQTKSPSL) is disordered. Positions 657 to 666 (HNSDSKEKKQ) are enriched in basic and acidic residues. The region spanning 670 to 791 (PSLVKTLKEM…RFIKSSFSHD (122 aa)) is the Arf-GAP domain. Residues 686–710 (CADCNTTARVEWCAINFPVVLCIDC) form a C4-type zinc finger.

In Schizosaccharomyces pombe (strain 972 / ATCC 24843) (Fission yeast), this protein is Protein csx2 (csx2).